The chain runs to 64 residues: Defensin beta 4A (64 aa).

The signal sequence occupies residues M1–G23. Intrachain disulfides connect C31–C60, C38–C53, and C43–C61. The tract at residues K33–K48 is phosphatidylinositol 4,5-bisphosphate (PIP2) binding.

It belongs to the beta-defensin family. LAP/TAP subfamily. In terms of assembly, monomer. Homodimer.

It localises to the secreted. In terms of biological role, exhibits antimicrobial activity against Gram-negative bacteria and Gram-positive bacteria, with highest activity against Gram-negative bacteria. Antimicrobial activity against P.aruginosa seems to be salt-sensitive and is reduced with high salt concentrations greater than 25 mM. Also exhibits antimicrobial activity against the yeast C.albicans. Permeabilizes C.albicans cell membranes via targeting plasma membrane lipid phosphatidylinositol 4,5-bisphosphate (PIP2), thereby leading to cell fragmentation and cell death. Acts as a ligand for C-C chemokine receptor CCR6. Binds to CCR6 and induces chemotactic activity of CCR6-expressing cells, such as immature dendritic cells and memory T cells. This Macaca mulatta (Rhesus macaque) protein is Defensin beta 4A (DEFB4A).